We begin with the raw amino-acid sequence, 204 residues long: Ras-related protein Rab-7L1 (204 aa).

GTP-binding residues include Ser33, Lys34, His35, Tyr36, Lys37, and Thr39. Positions 36 to 44 match the Effector region motif; sequence YKSTVGVDF. Thr71 carries the post-translational modification Phosphothreonine; by LRRK2. The residue at position 72 (Ser72) is a Phosphoserine. 3 residues coordinate GTP: Lys126, Val156, and Lys157. S-geranylgeranyl cysteine attachment occurs at residues Cys203 and Cys204.

This sequence belongs to the small GTPase superfamily. Rab family. As to quaternary structure, interacts with LRRK2 (via the N-terminus); this interaction is direct and stimulates kinase activity.

It is found in the cell membrane. The protein localises to the cytoplasm. The protein resides in the perinuclear region. Its subcellular location is the golgi apparatus. It localises to the golgi apparatus membrane. It is found in the trans-Golgi network. The protein localises to the cytoskeleton. The small GTPases Rab are key regulators in vesicle trafficking. Essential for maintaining the integrity of endosome-trans-Golgi network structure. Together with LRRK2, plays a role in the retrograde trafficking pathway for recycling proteins, such as mannose 6 phosphate receptor (M6PR), between lysosomes and the Golgi apparatus in a retromer-dependent manner. Recruits LRRK2 to the Golgi apparatus and stimulates LRRK2 kinase activity. Stimulates phosphorylation of RAB10 'Thr-73' by LRRK2. Also regulates neuronal process morphology in the intact central nervous system (CNS). The protein is Ras-related protein Rab-7L1 (Rab29) of Mus musculus (Mouse).